We begin with the raw amino-acid sequence, 176 residues long: Outer membrane protein assembly factor BamE (176 aa).

The first 21 residues, 1–21 (MQNAKLMLTCLAFAGLAALAG), serve as a signal peptide directing secretion. Cys22 carries N-palmitoyl cysteine lipidation. Cys22 is lipidated: S-diacylglycerol cysteine. A disordered region spans residues 121 to 176 (KEGSTTVTQPADQQKPEAQKEEPPKPGSTLEQLQREVDEAQPVPVPTPEPLDPSPQ). Residues 123–132 (GSTTVTQPAD) are compositionally biased toward polar residues. Positions 134-144 (QKPEAQKEEPP) are enriched in basic and acidic residues. Over residues 163 to 176 (VPVPTPEPLDPSPQ) the composition is skewed to pro residues.

Belongs to the BamE family. Part of the Bam complex.

Its subcellular location is the cell outer membrane. Part of the outer membrane protein assembly complex, which is involved in assembly and insertion of beta-barrel proteins into the outer membrane. May have a structural role in maintaining the cell envelope integrity. The sequence is that of Outer membrane protein assembly factor BamE from Pseudomonas aeruginosa (strain ATCC 15692 / DSM 22644 / CIP 104116 / JCM 14847 / LMG 12228 / 1C / PRS 101 / PAO1).